The sequence spans 448 residues: Signal recognition particle 54 kDa protein (448 aa).

GTP-binding positions include 107–114 (GIQGSGKT), 189–193 (DSAGR), and 247–250 (TKLD).

The protein belongs to the GTP-binding SRP family. SRP54 subfamily. Part of the signal recognition particle protein translocation system, which is composed of SRP and FtsY. Archaeal SRP consists of a 7S RNA molecule of 300 nucleotides and two protein subunits: SRP54 and SRP19.

The protein localises to the cytoplasm. It carries out the reaction GTP + H2O = GDP + phosphate + H(+). Involved in targeting and insertion of nascent membrane proteins into the cytoplasmic membrane. Binds to the hydrophobic signal sequence of the ribosome-nascent chain (RNC) as it emerges from the ribosomes. The SRP-RNC complex is then targeted to the cytoplasmic membrane where it interacts with the SRP receptor FtsY. The chain is Signal recognition particle 54 kDa protein from Thermococcus kodakarensis (strain ATCC BAA-918 / JCM 12380 / KOD1) (Pyrococcus kodakaraensis (strain KOD1)).